Here is a 256-residue protein sequence, read N- to C-terminus: Ribosomal RNA small subunit methyltransferase A (256 aa).

S-adenosyl-L-methionine contacts are provided by N12, L14, G39, E60, D85, and N103.

Belongs to the class I-like SAM-binding methyltransferase superfamily. rRNA adenine N(6)-methyltransferase family. RsmA subfamily.

It localises to the cytoplasm. It catalyses the reaction adenosine(1518)/adenosine(1519) in 16S rRNA + 4 S-adenosyl-L-methionine = N(6)-dimethyladenosine(1518)/N(6)-dimethyladenosine(1519) in 16S rRNA + 4 S-adenosyl-L-homocysteine + 4 H(+). Its function is as follows. Specifically dimethylates two adjacent adenosines (A1518 and A1519) in the loop of a conserved hairpin near the 3'-end of 16S rRNA in the 30S particle. May play a critical role in biogenesis of 30S subunits. This is Ribosomal RNA small subunit methyltransferase A from Legionella pneumophila subsp. pneumophila (strain Philadelphia 1 / ATCC 33152 / DSM 7513).